A 175-amino-acid polypeptide reads, in one-letter code: Cuticle protein CP1876 (175 aa).

Calcified shell.

This Cancer pagurus (Rock crab) protein is Cuticle protein CP1876.